Consider the following 741-residue polypeptide: Subtilisin-like protease SBT4.4 (741 aa).

The signal sequence occupies residues 1–24 (MAKGTTFIFLFSSLLVLSLSSVSA). Residues 25–112 (DKDDHGDQQV…VFPSRKLKLQ (88 aa)) constitute a propeptide, activation peptide. In terms of domain architecture, Inhibitor I9 spans 34–111 (VYIVYLGSLP…SVFPSRKLKL (78 aa)). Residues 116 to 589 (SWNFMGLKEG…SGHVDPIDAI (474 aa)) form the Peptidase S8 domain. D144 serves as the catalytic Charge relay system. N175 and N195 each carry an N-linked (GlcNAc...) asparagine glycan. Residue H204 is the Charge relay system of the active site. Residues N227 and N357 are each glycosylated (N-linked (GlcNAc...) asparagine). Residues 359-445 (TNYPLVYGKS…LSNDDYKSLV (87 aa)) enclose the PA domain. N449 is a glycosylation site (N-linked (GlcNAc...) asparagine). Catalysis depends on S528, which acts as the Charge relay system. 4 N-linked (GlcNAc...) asparagine glycosylation sites follow: N565, N610, N623, and N654.

The protein belongs to the peptidase S8 family. Post-translationally, the C-terminal propeptide is autocleaved.

It localises to the secreted. The chain is Subtilisin-like protease SBT4.4 from Arabidopsis thaliana (Mouse-ear cress).